Here is a 431-residue protein sequence, read N- to C-terminus: CCA-adding enzyme (431 aa).

ATP is bound by residues S50 and K53. CTP contacts are provided by S50 and K53. Residues D61, D63, and D112 each coordinate Mg(2+). The ATP site is built by H135, K155, and Y164. CTP-binding residues include H135, K155, and Y164.

It belongs to the tRNA nucleotidyltransferase/poly(A) polymerase family. Archaeal CCA-adding enzyme subfamily. Homodimer. Mg(2+) serves as cofactor.

It catalyses the reaction a tRNA precursor + 2 CTP + ATP = a tRNA with a 3' CCA end + 3 diphosphate. The enzyme catalyses a tRNA with a 3' CCA end + 2 CTP + ATP = a tRNA with a 3' CCACCA end + 3 diphosphate. Its function is as follows. Catalyzes the addition and repair of the essential 3'-terminal CCA sequence in tRNAs without using a nucleic acid template. Adds these three nucleotides in the order of C, C, and A to the tRNA nucleotide-73, using CTP and ATP as substrates and producing inorganic pyrophosphate. tRNA 3'-terminal CCA addition is required both for tRNA processing and repair. Also involved in tRNA surveillance by mediating tandem CCA addition to generate a CCACCA at the 3' terminus of unstable tRNAs. While stable tRNAs receive only 3'-terminal CCA, unstable tRNAs are marked with CCACCA and rapidly degraded. In Thermoplasma acidophilum (strain ATCC 25905 / DSM 1728 / JCM 9062 / NBRC 15155 / AMRC-C165), this protein is CCA-adding enzyme.